The chain runs to 310 residues: Methionyl-tRNA formyltransferase (310 aa).

Serine 106–proline 109 provides a ligand contact to (6S)-5,6,7,8-tetrahydrofolate.

This sequence belongs to the Fmt family.

The enzyme catalyses L-methionyl-tRNA(fMet) + (6R)-10-formyltetrahydrofolate = N-formyl-L-methionyl-tRNA(fMet) + (6S)-5,6,7,8-tetrahydrofolate + H(+). In terms of biological role, attaches a formyl group to the free amino group of methionyl-tRNA(fMet). The formyl group appears to play a dual role in the initiator identity of N-formylmethionyl-tRNA by promoting its recognition by IF2 and preventing the misappropriation of this tRNA by the elongation apparatus. The polypeptide is Methionyl-tRNA formyltransferase (Fervidobacterium nodosum (strain ATCC 35602 / DSM 5306 / Rt17-B1)).